The following is a 388-amino-acid chain: Succinate--CoA ligase [ADP-forming] subunit beta (388 aa).

ATP-binding positions include K46, 53–55 (GRG), E99, C102, and E107. The Mg(2+) site is built by N199 and D213. Substrate contacts are provided by residues N264 and 321–323 (GIV).

Belongs to the succinate/malate CoA ligase beta subunit family. In terms of assembly, heterotetramer of two alpha and two beta subunits. It depends on Mg(2+) as a cofactor.

It carries out the reaction succinate + ATP + CoA = succinyl-CoA + ADP + phosphate. It catalyses the reaction GTP + succinate + CoA = succinyl-CoA + GDP + phosphate. The protein operates within carbohydrate metabolism; tricarboxylic acid cycle; succinate from succinyl-CoA (ligase route): step 1/1. Its function is as follows. Succinyl-CoA synthetase functions in the citric acid cycle (TCA), coupling the hydrolysis of succinyl-CoA to the synthesis of either ATP or GTP and thus represents the only step of substrate-level phosphorylation in the TCA. The beta subunit provides nucleotide specificity of the enzyme and binds the substrate succinate, while the binding sites for coenzyme A and phosphate are found in the alpha subunit. This Actinobacillus pleuropneumoniae serotype 5b (strain L20) protein is Succinate--CoA ligase [ADP-forming] subunit beta.